A 146-amino-acid chain; its full sequence is Large ribosomal subunit protein uL15 (146 aa).

Over residues 1-10 (MKLHELKPAE) the composition is skewed to basic and acidic residues. The tract at residues 1–51 (MKLHELKPAEGSRQVRNRVGRGTSSGNGKTAGRGQKGQKARSGGGVRLGFE) is disordered. 2 stretches are compositionally biased toward gly residues: residues 23 to 35 (TSSG…GRGQ) and 42 to 51 (SGGGVRLGFE).

The protein belongs to the universal ribosomal protein uL15 family. In terms of assembly, part of the 50S ribosomal subunit.

Functionally, binds to the 23S rRNA. This chain is Large ribosomal subunit protein uL15, found in Enterococcus faecalis (strain ATCC 700802 / V583).